Here is a 750-residue protein sequence, read N- to C-terminus: Methylmalonyl-CoA mutase, mitochondrial (750 aa).

Residues 1 to 32 (MLRAKNQLFLLSPHYLRQVKESSGSRLIQQRL) constitute a mitochondrion transit peptide. A malonyl-CoA-binding site is contributed by Gln-50. Position 89 is an N6-acetyllysine (Lys-89). Malonyl-CoA is bound by residues 96–99 (YPTM) and 106–110 (TIRQY). N6-acetyllysine is present on Lys-212. Malonyl-CoA-binding positions include 216-218 (TIQ), Arg-228, Lys-255, His-265, and 304-306 (RLS). Position 335 is an N6-acetyllysine (Lys-335). Position 343 is an N6-succinyllysine (Lys-343). Position 481 is a phosphoserine (Ser-481). N6-succinyllysine is present on Lys-595. Lys-602 is modified (N6-acetyllysine). Positions 614 to 746 (RPRLLVAKMG…DDIEKCLEKK (133 aa)) constitute a B12-binding domain. His-627 is a binding site for adenosylcob(III)alamin.

It belongs to the methylmalonyl-CoA mutase family. In terms of assembly, homodimer. Interacts (the apoenzyme form) with MMAA; the interaction is GTP dependent. Adenosylcob(III)alamin serves as cofactor.

It localises to the mitochondrion matrix. It is found in the mitochondrion. Its subcellular location is the cytoplasm. It catalyses the reaction (R)-methylmalonyl-CoA = succinyl-CoA. During catalysis, accumulation of oxidized inactive cofactor hydroxocobalamin (OH2Cbl) leads to loss of MMUT activity. Interaction with MMAA decreases the rate of OH2Cbl formation and promotes the replacement of OH2Cbl by the active cofactor adenosylcobalamin (AdoCbl), thereby restoring MMUT activity. Inhibited by itaconyl-CoA, a metabolite that inactivates the coenzyme B12 cofactor. Inhibited at high concentration of substrate. In terms of biological role, catalyzes the reversible isomerization of methylmalonyl-CoA (MMCoA) (generated from branched-chain amino acid metabolism and degradation of dietary odd chain fatty acids and cholesterol) to succinyl-CoA (3-carboxypropionyl-CoA), a key intermediate of the tricarboxylic acid cycle. This Homo sapiens (Human) protein is Methylmalonyl-CoA mutase, mitochondrial.